The primary structure comprises 434 residues: 3-phosphoshikimate 1-carboxyvinyltransferase (434 aa).

Lysine 15, serine 16, and arginine 20 together coordinate 3-phosphoshikimate. Lysine 15 provides a ligand contact to phosphoenolpyruvate. Residues glycine 96 and arginine 124 each contribute to the phosphoenolpyruvate site. Positions 169, 171, 195, 319, and 346 each coordinate 3-phosphoshikimate. A phosphoenolpyruvate-binding site is contributed by glutamine 171. The active-site Proton acceptor is aspartate 319. Phosphoenolpyruvate is bound by residues arginine 350 and arginine 394.

This sequence belongs to the EPSP synthase family. In terms of assembly, monomer.

The protein resides in the cytoplasm. The catalysed reaction is 3-phosphoshikimate + phosphoenolpyruvate = 5-O-(1-carboxyvinyl)-3-phosphoshikimate + phosphate. It participates in metabolic intermediate biosynthesis; chorismate biosynthesis; chorismate from D-erythrose 4-phosphate and phosphoenolpyruvate: step 6/7. In terms of biological role, catalyzes the transfer of the enolpyruvyl moiety of phosphoenolpyruvate (PEP) to the 5-hydroxyl of shikimate-3-phosphate (S3P) to produce enolpyruvyl shikimate-3-phosphate and inorganic phosphate. The polypeptide is 3-phosphoshikimate 1-carboxyvinyltransferase (Chlorobaculum tepidum (strain ATCC 49652 / DSM 12025 / NBRC 103806 / TLS) (Chlorobium tepidum)).